An 819-amino-acid chain; its full sequence is Mitosis inhibitor protein kinase SWE1 (819 aa).

Residue Ser36 is modified to Phosphoserine; by CDC5. Thr45 is modified (phosphothreonine; by CDC28). A phosphoserine; by CDC28 mark is found at Ser56 and Ser63. Ser70 carries the phosphoserine modification. At Thr74 the chain carries Phosphothreonine; by CDC28. Residues 86–105 are disordered; sequence KIEEEEEEEEEGKDEESVDS. Acidic residues predominate over residues 88 to 102; sequence EEEEEEEEEGKDEES. Phosphoserine; by CDC5 is present on Ser102. Ser105 bears the Phosphoserine; by CDC28 mark. The residue at position 111 (Ser111) is a Phosphoserine; by CDC5, CDC28 and CLA4. Residues 117–168 are disordered; it reads ESVTTPITKRSAEKTNSPISLKQWNQRWFPKNDARTENTSSSSSYSVAKPNQ. Residue Ser118 is modified to Phosphoserine; by CDC5. Residues 118 to 142 are compositionally biased toward polar residues; sequence SVTTPITKRSAEKTNSPISLKQWNQ. Phosphothreonine; by CDC28 occurs at positions 121 and 124. A Phosphoserine; by CDC28 modification is found at Ser127. Position 131 is a phosphothreonine; by CDC5 (Thr131). A Phosphoserine; by CDC28 modification is found at Ser133. At Ser136 the chain carries Phosphoserine; by CDC28 and CLA4. A phosphoserine; by CDC5 mark is found at Ser156 and Ser169. Thr196 carries the phosphothreonine; by CDC28 modification. The residue at position 201 (Ser201) is a Phosphoserine; by CDC28. A phosphoserine; by CDC5 mark is found at Ser225 and Ser254. Ser262 carries the phosphoserine modification. Phosphoserine; by CDC28 is present on residues Ser263 and Ser266. Residues 278–297 form a disordered region; sequence NQTNILSPTNSLVTNSSPQT. A Phosphothreonine; by CDC5 modification is found at Thr280. A phosphoserine mark is found at Ser284 and Ser294. Ser312 is subject to Phosphoserine; by CLA4. A disordered region spans residues 341–395; sequence PIIISSHHSTRKNPQPYQFRGRYDNDTDEEISTPTRRKSIIGATSQTHRESRPLS. At Ser345 the chain carries Phosphoserine. A phosphothreonine; by CDC28 mark is found at Thr367 and Thr373. Ser379 bears the Phosphoserine; by CDC5 and CLA4 mark. Thr384 carries the phosphothreonine; by CDC28 modification. A phosphoserine; by CDC5 and CLA4 mark is found at Ser395 and Ser438. Residues 444-794 enclose the Protein kinase domain; the sequence is FTNVHSIGKG…NQILQTEECL (351 aa). ATP-binding positions include 450-458 and Lys473; that span reads IGKGQFSTV. Residue Asp579 is the Proton acceptor of the active site. Positions 584 and 597 each coordinate Mg(2+). Ser610 is modified (phosphoserine; by CDC5). Residue Thr629 is modified to Phosphothreonine; by CDC5. Thr688 carries the phosphothreonine; by CDC5 and CLA4 modification. Thr692 is subject to Phosphothreonine. The span at 707–716 shows a compositional bias: polar residues; that stretch reads SNNAGTSTVH. The disordered stretch occupies residues 707–736; that stretch reads SNNAGTSTVHNNSNINNPNMNNGNDNNNVN. The span at 717–736 shows a compositional bias: low complexity; that stretch reads NNSNINNPNMNNGNDNNNVN. Lys741 is covalently cross-linked (Glycyl lysine isopeptide (Lys-Gly) (interchain with G-Cter in ubiquitin)).

The protein belongs to the protein kinase superfamily. Ser/Thr protein kinase family. WEE1 subfamily. Interacts with CLB2-CDC28. Partial hyperphosphorylation of SWE1 by CLB2-CDC28 stabilizes the ternary complex of SWE1 and CLB2-CDC28 and stimulates kinase activity of SWE1 in a positive feedback loop, maintaining CLB2-CDC28 in the tyrosine-phosphorylated state. Fully hyperphosphorylated SWE1 dissociates from CLB2-CDC28. Interacts with HSL7, KCC4 and MET30. Ubiquitinated by the SCF(MET30) complex, leading to its degradation by the proteasome. In terms of processing, phosphorylated progressively by CLA4, CLB2-CDC28 and CDC5. CLA4-dependent phosphorylation occurs in late S phase, followed by phosphorylation by CLB2-CDC28 in early G2, when the levels of mitotic CLB2 increases. This phosphorylation is critical for triggering subsequent SWE1-CDC5 interaction and CDC5-dependent phosphorylation. The resulting cumulative hyperphosphorylation down-regulates SWE1 by targeting it for ubiquitin-mediated degradation. This stepwise phosphorylation is thought to be a mechanism to integrate the different checkpoint requirements before entry into mitosis.

It is found in the bud neck. The protein localises to the nucleus. The catalysed reaction is L-seryl-[protein] + ATP = O-phospho-L-seryl-[protein] + ADP + H(+). The enzyme catalyses L-threonyl-[protein] + ATP = O-phospho-L-threonyl-[protein] + ADP + H(+). Its function is as follows. Protein kinase that acts as a negative regulator of entry into mitosis (G2 to M transition) by phosphorylating and inhibiting the mitosis-promoting cyclin B-bound CDC28 at 'Tyr-19'. SWE1-mediated inhibition of CDC28 acts in a cell size or morphogenesis checkpoint to delay mitosis in response to defects in growth, actin organization or bud formation. Inhibits the activity of B-type cyclins in replication initiation strongly for CLB2, moderately for CLB3 and CLB4, and there is no apparent inhibition for CLB5 and CLB6, correlating with the normal expression timing of those cyclins. Hyperphosphorylation and degradation of SWE1 when all checkpoint requirement are met releases CLB2-CDC28 from inhibition and allows for progression through the cell cycle. SWE1-dependent CDC28 phosphorylation is also required for pachytene arrest upon activation of the recombination checkpoint during meiosis. Also involved in the regulation of nitrogen starvation- and short chain alcohol-induced filamentous growth, or filamentous differentiation in response to slowed DNA synthesis. Can act both on serines and on tyrosines. This Saccharomyces cerevisiae (strain ATCC 204508 / S288c) (Baker's yeast) protein is Mitosis inhibitor protein kinase SWE1 (SWE1).